We begin with the raw amino-acid sequence, 285 residues long: N-alpha-acetyltransferase 40 (285 aa).

The N-acetyltransferase domain occupies 88 to 274 (INYKLHKSRG…GGGRVVVPCD (187 aa)). Substrate contacts are provided by residues Tyr116, 163–165 (TEE), and Tyr185. Acetyl-CoA contacts are provided by residues 187-189 (VHV) and 195-200 (GHGIGR). Position 228 (Thr228) interacts with substrate. Asn233 lines the acetyl-CoA pocket.

Belongs to the acetyltransferase family. NAA40 subfamily.

Its subcellular location is the nucleus. The protein localises to the cytoplasm. It carries out the reaction N-terminal L-seryl-[histone H4] + acetyl-CoA = N-terminal N(alpha)-acetyl-L-seryl-[histone H4] + CoA + H(+). The catalysed reaction is N-terminal L-seryl-[histone H2A] + acetyl-CoA = N-terminal N(alpha)-acetyl-L-seryl-[histone H2A] + CoA + H(+). Functionally, N-alpha-acetyltransferase that specifically mediates the acetylation of the N-terminal residues of histones H4 and H2A. The protein is N-alpha-acetyltransferase 40 of Saccharomyces cerevisiae (strain ATCC 204508 / S288c) (Baker's yeast).